Reading from the N-terminus, the 125-residue chain is Large ribosomal subunit protein bL12 (125 aa).

It belongs to the bacterial ribosomal protein bL12 family. In terms of assembly, homodimer. Part of the ribosomal stalk of the 50S ribosomal subunit. Forms a multimeric L10(L12)X complex, where L10 forms an elongated spine to which 2 to 4 L12 dimers bind in a sequential fashion. Binds GTP-bound translation factors.

In terms of biological role, forms part of the ribosomal stalk which helps the ribosome interact with GTP-bound translation factors. Is thus essential for accurate translation. The chain is Large ribosomal subunit protein bL12 from Methylorubrum extorquens (strain CM4 / NCIMB 13688) (Methylobacterium extorquens).